Here is a 273-residue protein sequence, read N- to C-terminus: SPRY domain-containing SOCS box protein 1 (273 aa).

Tyr-31 is subject to Phosphotyrosine; by MET. One can recognise a B30.2/SPRY domain in the interval 33 to 231 (KPTRLDLLLD…IRMRYLNGLD (199 aa)). An SOCS box domain is found at 232-273 (PEPLPLMDLCRRSVRLALGRERLGEIHTLPLPASLKAYLLYQ).

It belongs to the SPSB family. In terms of assembly, component of the probable ECS(SPSB1) E3 ubiquitin-protein ligase complex which contains CUL5, RNF7/RBX2, Elongin BC complex and SPSB1. Interacts with CUL5, RNF7, ELOB and ELOC. Directly interacts with MET tyrosine kinase domain in the presence and in the absence of HGF, however HGF treatment has a positive effect on this interaction. When phosphorylated, interacts with RASA1 without affecting its stability. Interacts (via B30.2/SPRY domain) with PAWR; this interaction is direct and occurs in association with the Elongin BC complex. Interacts with NOS2. Interacts with EPHB2.

It localises to the cytoplasm. It is found in the cytosol. It participates in protein modification; protein ubiquitination. Substrate recognition component of a SCF-like ECS (Elongin BC-CUL2/5-SOCS-box protein) E3 ubiquitin-protein ligase complex which mediates the ubiquitination and subsequent proteasomal degradation of target proteins. Negatively regulates nitric oxide (NO) production and limits cellular toxicity in activated macrophages by mediating the ubiquitination and proteasomal degradation of NOS2. Acts as a bridge which links NOS2 with the ECS E3 ubiquitin ligase complex components ELOC and CUL5. This chain is SPRY domain-containing SOCS box protein 1 (SPSB1), found in Homo sapiens (Human).